Here is a 445-residue protein sequence, read N- to C-terminus: Exodeoxyribonuclease 7 large subunit (445 aa).

Belongs to the XseA family. Heterooligomer composed of large and small subunits.

The protein resides in the cytoplasm. The enzyme catalyses Exonucleolytic cleavage in either 5'- to 3'- or 3'- to 5'-direction to yield nucleoside 5'-phosphates.. In terms of biological role, bidirectionally degrades single-stranded DNA into large acid-insoluble oligonucleotides, which are then degraded further into small acid-soluble oligonucleotides. The sequence is that of Exodeoxyribonuclease 7 large subunit from Shewanella pealeana (strain ATCC 700345 / ANG-SQ1).